The primary structure comprises 30 residues: Dendrotoxin B (30 aa).

An intrachain disulfide couples Cys-3 to Cys-22.

It belongs to the three-finger toxin family. Short-chain subfamily. Orphan group XI sub-subfamily. In terms of processing, contains 4 disulfide bonds. Expressed by the venom gland.

The protein localises to the secreted. Functionally, blocks voltage-gated potassium channels (Kv). This is the slowly inactivating phase of potassium efflux which is blocked by this toxin. The sequence is that of Dendrotoxin B from Dendroaspis angusticeps (Eastern green mamba).